A 209-amino-acid polypeptide reads, in one-letter code: Uracil phosphoribosyltransferase (209 aa).

Residues arginine 78, arginine 103, and 130–138 (DPMLATAGS) contribute to the 5-phospho-alpha-D-ribose 1-diphosphate site. Residues isoleucine 193 and 198–200 (GDA) contribute to the uracil site. Position 199 (aspartate 199) interacts with 5-phospho-alpha-D-ribose 1-diphosphate.

The protein belongs to the UPRTase family. Requires Mg(2+) as cofactor.

The enzyme catalyses UMP + diphosphate = 5-phospho-alpha-D-ribose 1-diphosphate + uracil. It participates in pyrimidine metabolism; UMP biosynthesis via salvage pathway; UMP from uracil: step 1/1. Allosterically activated by GTP. In terms of biological role, catalyzes the conversion of uracil and 5-phospho-alpha-D-ribose 1-diphosphate (PRPP) to UMP and diphosphate. In Methylibium petroleiphilum (strain ATCC BAA-1232 / LMG 22953 / PM1), this protein is Uracil phosphoribosyltransferase.